The following is a 160-amino-acid chain: 2-amino-4-hydroxy-6-hydroxymethyldihydropteridine pyrophosphokinase (160 aa).

Belongs to the HPPK family. As to quaternary structure, monomer.

It catalyses the reaction 6-hydroxymethyl-7,8-dihydropterin + ATP = (7,8-dihydropterin-6-yl)methyl diphosphate + AMP + H(+). Its pathway is cofactor biosynthesis; tetrahydrofolate biosynthesis; 2-amino-4-hydroxy-6-hydroxymethyl-7,8-dihydropteridine diphosphate from 7,8-dihydroneopterin triphosphate: step 4/4. Its function is as follows. Catalyzes the transfer of pyrophosphate from adenosine triphosphate (ATP) to 6-hydroxymethyl-7,8-dihydropterin, an enzymatic step in folate biosynthesis pathway. This chain is 2-amino-4-hydroxy-6-hydroxymethyldihydropteridine pyrophosphokinase (folK), found in Haemophilus influenzae (strain ATCC 51907 / DSM 11121 / KW20 / Rd).